The primary structure comprises 100 residues: Co-chaperonin GroES (100 aa).

This sequence belongs to the GroES chaperonin family. As to quaternary structure, heptamer of 7 subunits arranged in a ring. Interacts with the chaperonin GroEL.

Its subcellular location is the cytoplasm. Functionally, together with the chaperonin GroEL, plays an essential role in assisting protein folding. The GroEL-GroES system forms a nano-cage that allows encapsulation of the non-native substrate proteins and provides a physical environment optimized to promote and accelerate protein folding. GroES binds to the apical surface of the GroEL ring, thereby capping the opening of the GroEL channel. The chain is Co-chaperonin GroES from Nocardia farcinica (strain IFM 10152).